A 283-amino-acid chain; its full sequence is Aquaporin PIP2-5 (283 aa).

A run of 2 helical transmembrane segments spans residues 37–57 and 74–94; these read AVIA…ATVI and CGGV…FILV. The NPA 1 signature appears at 106–108; sequence NPA. 3 consecutive transmembrane segments (helical) span residues 125 to 145, 167 to 187, and 199 to 219; these read ILYI…VKGF, GTGL…VFSA, and VPVL…LATI. Residues 227 to 229 carry the NPA 2 motif; the sequence is NPA. Residues 249-269 form a helical membrane-spanning segment; the sequence is IFWVGPFIGAAIAALYHQIVL.

This sequence belongs to the MIP/aquaporin (TC 1.A.8) family. PIP (TC 1.A.8.11) subfamily. Expressed in roots.

It localises to the cell membrane. In terms of biological role, water channel required to facilitate the transport of water across cell membrane. May play a role in root water uptake. The protein is Aquaporin PIP2-5 (PIP2-5) of Oryza sativa subsp. japonica (Rice).